The following is a 247-amino-acid chain: DNA repair protein RecO (247 aa).

It belongs to the RecO family.

Involved in DNA repair and RecF pathway recombination. The chain is DNA repair protein RecO from Alkalilimnicola ehrlichii (strain ATCC BAA-1101 / DSM 17681 / MLHE-1).